The primary structure comprises 258 residues: Small ribosomal subunit protein mS23 (258 aa).

A compositionally biased stretch (polar residues) spans 230–239 (KKNSTKQSWA). The segment at 230–258 (KKNSTKQSWAEATEEKEEQDSAEPEELKL) is disordered. Over residues 241-258 (ATEEKEEQDSAEPEELKL) the composition is skewed to acidic residues.

This sequence belongs to the mitochondrion-specific ribosomal protein mS23 family. Component of the mitochondrial small ribosomal subunit.

It is found in the mitochondrion. In Eremothecium gossypii (strain ATCC 10895 / CBS 109.51 / FGSC 9923 / NRRL Y-1056) (Yeast), this protein is Small ribosomal subunit protein mS23 (RSM25).